The following is a 121-amino-acid chain: Ribonuclease P protein component (121 aa).

This sequence belongs to the RnpA family. As to quaternary structure, consists of a catalytic RNA component (M1 or rnpB) and a protein subunit.

It catalyses the reaction Endonucleolytic cleavage of RNA, removing 5'-extranucleotides from tRNA precursor.. Functionally, RNaseP catalyzes the removal of the 5'-leader sequence from pre-tRNA to produce the mature 5'-terminus. It can also cleave other RNA substrates such as 4.5S RNA. The protein component plays an auxiliary but essential role in vivo by binding to the 5'-leader sequence and broadening the substrate specificity of the ribozyme. In Lactobacillus delbrueckii subsp. bulgaricus (strain ATCC 11842 / DSM 20081 / BCRC 10696 / JCM 1002 / NBRC 13953 / NCIMB 11778 / NCTC 12712 / WDCM 00102 / Lb 14), this protein is Ribonuclease P protein component.